Here is a 194-residue protein sequence, read N- to C-terminus: Imidazoleglycerol-phosphate dehydratase (194 aa).

The protein belongs to the imidazoleglycerol-phosphate dehydratase family.

It localises to the cytoplasm. The enzyme catalyses D-erythro-1-(imidazol-4-yl)glycerol 3-phosphate = 3-(imidazol-4-yl)-2-oxopropyl phosphate + H2O. Its pathway is amino-acid biosynthesis; L-histidine biosynthesis; L-histidine from 5-phospho-alpha-D-ribose 1-diphosphate: step 6/9. This Ruminiclostridium cellulolyticum (strain ATCC 35319 / DSM 5812 / JCM 6584 / H10) (Clostridium cellulolyticum) protein is Imidazoleglycerol-phosphate dehydratase.